Here is a 574-residue protein sequence, read N- to C-terminus: Eukaryotic translation initiation factor 3 subunit D (574 aa).

Residues 153–178 (QRRGGNARQGQRGQGGRFGGDRPKER) are disordered. Residues 154–163 (RRGGNARQGQ) are compositionally biased toward low complexity. The segment at 312–326 (PVETLTVSETSAEPP) is RNA gate. Residues 555–574 (EGTFDSERESSEEENSDDDQ) form a disordered region. Residues 564–574 (SSEEENSDDDQ) show a composition bias toward acidic residues.

It belongs to the eIF-3 subunit D family. In terms of assembly, component of the eukaryotic translation initiation factor 3 (eIF-3) complex.

Its subcellular location is the cytoplasm. MRNA cap-binding component of the eukaryotic translation initiation factor 3 (eIF-3) complex, which is involved in protein synthesis of a specialized repertoire of mRNAs and, together with other initiation factors, stimulates binding of mRNA and methionyl-tRNAi to the 40S ribosome. The eIF-3 complex specifically targets and initiates translation of a subset of mRNAs involved in cell proliferation. In the eIF-3 complex, eif3d specifically recognizes and binds the 7-methylguanosine cap of a subset of mRNAs. This is Eukaryotic translation initiation factor 3 subunit D from Caenorhabditis briggsae.